Here is a 161-residue protein sequence, read N- to C-terminus: Phosphopantetheine adenylyltransferase (161 aa).

Residue Ser9 participates in substrate binding. ATP is bound by residues Ser9–Phe10 and His17. Substrate-binding residues include Lys41, Thr73, and Arg87. Residues Gly88–Arg90, Glu98, and Phe123–Thr129 each bind ATP.

This sequence belongs to the bacterial CoaD family. Homohexamer. Mg(2+) is required as a cofactor.

Its subcellular location is the cytoplasm. It carries out the reaction (R)-4'-phosphopantetheine + ATP + H(+) = 3'-dephospho-CoA + diphosphate. Its pathway is cofactor biosynthesis; coenzyme A biosynthesis; CoA from (R)-pantothenate: step 4/5. Reversibly transfers an adenylyl group from ATP to 4'-phosphopantetheine, yielding dephospho-CoA (dPCoA) and pyrophosphate. This Chloroflexus aggregans (strain MD-66 / DSM 9485) protein is Phosphopantetheine adenylyltransferase.